A 105-amino-acid chain; its full sequence is Tyrosine-protein phosphatase 12 (105 aa).

The region spanning 1-105 (WRMIWEKRVE…NLRRIVRTEF (105 aa)) is the Tyrosine-protein phosphatase domain. Position 84 (aspartate 84) interacts with substrate.

Belongs to the protein-tyrosine phosphatase family.

It catalyses the reaction O-phospho-L-tyrosyl-[protein] + H2O = L-tyrosyl-[protein] + phosphate. The protein is Tyrosine-protein phosphatase 12 (STY-12) of Styela plicata (Wrinkled sea squirt).